The sequence spans 344 residues: MKPKLLFEQLLSRQDLSSDQMQEVIHACMTGEFSDVQIATFLALMRMKSETVNELTAAAKVMRQLAHKIDLGNPLIDIVGTGGDGRNTFNVSTACSFVVAAAGIKVAKHGNRSVSSRSGSADLLEQAGFILNLSDSQVQNCINQCQLAFLFAPHYHPAMQHARAARQQLGIRTLFNLLGPLINPAQVKRQVVGVFSTNWLKTIATVLANLGSERSLVISSQDGLDEISIAAKSEVVEYRDGNFKQWFISPEDYGLKHSSLDAIIVDSPEQSLHLIQSVLSGDSGPARDIVLLNSAAAIYCAKDGISFDASIEEARIAIDSGKANHCFNKLRLLTQTLNKESNHE.

Residues G80, 83 to 84 (GD), T88, 90 to 93 (NVST), 108 to 116 (KHGNRSVSS), and S120 contribute to the 5-phospho-alpha-D-ribose 1-diphosphate site. Residue G80 participates in anthranilate binding. Position 92 (S92) interacts with Mg(2+). N111 is a binding site for anthranilate. Residue R166 participates in anthranilate binding. D225 and E226 together coordinate Mg(2+).

The protein belongs to the anthranilate phosphoribosyltransferase family. As to quaternary structure, homodimer. It depends on Mg(2+) as a cofactor.

It carries out the reaction N-(5-phospho-beta-D-ribosyl)anthranilate + diphosphate = 5-phospho-alpha-D-ribose 1-diphosphate + anthranilate. The protein operates within amino-acid biosynthesis; L-tryptophan biosynthesis; L-tryptophan from chorismate: step 2/5. Catalyzes the transfer of the phosphoribosyl group of 5-phosphorylribose-1-pyrophosphate (PRPP) to anthranilate to yield N-(5'-phosphoribosyl)-anthranilate (PRA). The sequence is that of Anthranilate phosphoribosyltransferase from Legionella pneumophila (strain Corby).